The sequence spans 290 residues: ATP synthase gamma chain (290 aa).

This sequence belongs to the ATPase gamma chain family. In terms of assembly, F-type ATPases have 2 components, CF(1) - the catalytic core - and CF(0) - the membrane proton channel. CF(1) has five subunits: alpha(3), beta(3), gamma(1), delta(1), epsilon(1). CF(0) has three main subunits: a, b and c.

The protein localises to the cell membrane. Functionally, produces ATP from ADP in the presence of a proton gradient across the membrane. The gamma chain is believed to be important in regulating ATPase activity and the flow of protons through the CF(0) complex. The protein is ATP synthase gamma chain of Akkermansia muciniphila (strain ATCC BAA-835 / DSM 22959 / JCM 33894 / BCRC 81048 / CCUG 64013 / CIP 107961 / Muc).